Consider the following 439-residue polypeptide: Ribosomal protein uS12 methylthiotransferase RimO (439 aa).

An MTTase N-terminal domain is found at 2–114 (SKLYLMSLGC…IDEMILKKTN (113 aa)). Positions 11, 45, 77, 146, 150, and 153 each coordinate [4Fe-4S] cluster. The Radical SAM core domain maps to 132–363 (TGSNSHAFIK…VDEVIEKSFE (232 aa)).

This sequence belongs to the methylthiotransferase family. RimO subfamily. [4Fe-4S] cluster serves as cofactor.

The protein localises to the cytoplasm. The catalysed reaction is L-aspartate(89)-[ribosomal protein uS12]-hydrogen + (sulfur carrier)-SH + AH2 + 2 S-adenosyl-L-methionine = 3-methylsulfanyl-L-aspartate(89)-[ribosomal protein uS12]-hydrogen + (sulfur carrier)-H + 5'-deoxyadenosine + L-methionine + A + S-adenosyl-L-homocysteine + 2 H(+). In terms of biological role, catalyzes the methylthiolation of an aspartic acid residue of ribosomal protein uS12. The protein is Ribosomal protein uS12 methylthiotransferase RimO of Campylobacter jejuni subsp. jejuni serotype O:6 (strain 81116 / NCTC 11828).